We begin with the raw amino-acid sequence, 198 residues long: Putative 3-methyladenine DNA glycosylase (198 aa).

Belongs to the DNA glycosylase MPG family.

This Natranaerobius thermophilus (strain ATCC BAA-1301 / DSM 18059 / JW/NM-WN-LF) protein is Putative 3-methyladenine DNA glycosylase.